Consider the following 90-residue polypeptide: UPF0729 protein Bm1_03610 (90 aa).

The protein belongs to the UPF0729 family.

The protein is UPF0729 protein Bm1_03610 of Brugia malayi (Filarial nematode worm).